Reading from the N-terminus, the 212-residue chain is MRVALLGGTGNLGKGLALRLATLGHEIVVGSRREEKAEAKAAEYRRIAGDASITGMKNEDAAEACDIAVLTIPWEHAIDTARDLKNILREKIVVSPLVPVSRGAKGFTYSSERSAAEIVAEVLESEKVVSALHTIPAARFANLDEKFDWDVPVCGDDDESKKVVMSLISEIDGLRPLDAGPLSNSRLVESLTPLILNIMRFNGMGELGIKFL.

NADP(+)-binding positions include 9–12 (TGNL), 31–32 (SR), lysine 36, isoleucine 72, histidine 76, valine 98, and alanine 137. Leucine 207 contacts coenzyme F420-(gamma-Glu)n.

The protein belongs to the F420-dependent NADP reductase family. As to quaternary structure, homodimer.

The catalysed reaction is reduced coenzyme F420-(gamma-L-Glu)(n) + NADP(+) = oxidized coenzyme F420-(gamma-L-Glu)(n) + NADPH + 2 H(+). In terms of biological role, catalyzes the reversible reduction of NADP(+) by F420H(2). In this reaction the proS hydrogen at C5 of F420 is transferred into the proS position at C4 of NADPH. This is F420-dependent NADP reductase (fno) from Archaeoglobus fulgidus (strain ATCC 49558 / DSM 4304 / JCM 9628 / NBRC 100126 / VC-16).